A 398-amino-acid polypeptide reads, in one-letter code: MAKLTVKDVDLKGKKVLVRVDFNVPLKDGVITNDNRITAALPTIKYIIEQGGRAILFSHLGRVKEEADKEGKSLAPVAADLAAKLGQDVVFPGVTRGSKLEEAINALEDGQVLLVENTRFEDVDGKKESKNDEELGKYWASLGDGIFVNDAFGTAHRAHASNVGISANVEKAVAGFLLENEIAYIQEAVETPERPFVAILGGSKVSDKIGVIENLLEKADKVLIGGGMTYTFYKAQGIEIGNSLVEEDKLDVAKDLLEKSNGKLILPVDSKEANAFAGYTEVRDTEGEAVSEGFLGLDIGPKSIAEFDQALTGAKTVVWNGPMGVFENPDFQAGTIGVMDAIVKQPGVKSIIGGGDSAAAAINLGRADKFSWISTGGGASMELLEGKVLPGLAALTEK.

Residues aspartate 21 to asparagine 23, arginine 36, histidine 59 to arginine 62, arginine 119, and arginine 157 contribute to the substrate site. Residues lysine 208, glycine 296, glutamate 327, and glycine 354–serine 357 each bind ATP.

It belongs to the phosphoglycerate kinase family. Monomer.

The protein localises to the cytoplasm. The catalysed reaction is (2R)-3-phosphoglycerate + ATP = (2R)-3-phospho-glyceroyl phosphate + ADP. The protein operates within carbohydrate degradation; glycolysis; pyruvate from D-glyceraldehyde 3-phosphate: step 2/5. In Streptococcus pyogenes serotype M1, this protein is Phosphoglycerate kinase (pgk).